Here is a 257-residue protein sequence, read N- to C-terminus: Protein YIPF5 (257 aa).

Residues 1–124 (MSGFDNFNTD…KASDGSIMNE (124 aa)) are Cytoplasmic-facing. Residues 125-145 (TDLAGPMVFCLAFGATLLLTG) traverse the membrane as a helical segment. Residue lysine 146 is a topological domain, lumenal. Residues 147-167 (IQFGYVYGISAIGCLGMYCLL) form a helical membrane-spanning segment. Over 168–173 (NLMSMT) the chain is Cytoplasmic. The chain crosses the membrane as a helical span at residues 174–194 (GVSFGCVASVLGYCLLPMIIL). Residues 195 to 196 (SS) lie on the Lumenal side of the membrane. Residues 197–217 (FGVIFSLQGIMGIILTAAIIG) traverse the membrane as a helical segment. Over 218–236 (WCSLSASKIFISALAMDGQ) the chain is Cytoplasmic. The chain crosses the membrane as a helical span at residues 237-257 (QLLVAYPCALLYGVFALISVF).

Belongs to the YIP1 family.

It is found in the endoplasmic reticulum membrane. The protein resides in the golgi apparatus. Its subcellular location is the cis-Golgi network membrane. Plays a role in transport between endoplasmic reticulum and Golgi. The sequence is that of Protein YIPF5 (yipf5) from Danio rerio (Zebrafish).